A 189-amino-acid polypeptide reads, in one-letter code: Transmembrane protein 229b (189 aa).

Residues 1–17 lie on the Cytoplasmic side of the membrane; sequence MATTVTPEPLTALSRWY. A helical membrane pass occupies residues 18–38; it reads LYAIHGYFCEVMFTAAWEFVV. Over 39–43 the chain is Extracellular; it reads NCNWK. The helical transmembrane segment at 44–64 threads the bilayer; the sequence is FPGVTSVWALFIYGTCILIVE. Residues 65–75 are Cytoplasmic-facing; the sequence is RMYLCLKDRCN. The chain crosses the membrane as a helical span at residues 76–96; that stretch reads VLLRCIIYTLWTYFWEFGTGF. Over 97–114 the chain is Extracellular; it reads LLRQFNACPWDYSEFKYN. Residues 115–135 form a helical membrane-spanning segment; it reads FMGLITAEYAVPWFCASFIVE. Residues 136–189 are Cytoplasmic-facing; sequence RLVIRNTLRLRFDEVAESGQAEERLDRGGGGRGGRRGRGARAGATSANGYVKVD. A disordered region spans residues 158–189; it reads ERLDRGGGGRGGRRGRGARAGATSANGYVKVD.

The protein belongs to the TMEM229 family.

It is found in the membrane. This Danio rerio (Zebrafish) protein is Transmembrane protein 229b (tmem229b).